The sequence spans 296 residues: Large ribosomal subunit protein uL18B (296 aa).

Residues 251–296 form a disordered region; the sequence is PVHEKKPKKEVKKKRWNRAKLSLEQKKDRVAQKKASFLRAQEKADS. Residues 255 to 268 show a composition bias toward basic residues; it reads KKPKKEVKKKRWNR. A compositionally biased stretch (basic and acidic residues) spans 271 to 281; it reads LSLEQKKDRVA.

It belongs to the universal ribosomal protein uL18 family. In terms of assembly, component of the large ribosomal subunit (LSU). Part of a LSU subcomplex, the 5S RNP which is composed of the 5S RNA, RPL5 and RPL11.

The protein resides in the cytoplasm. The protein localises to the nucleus. It localises to the nucleolus. Component of the ribosome, a large ribonucleoprotein complex responsible for the synthesis of proteins in the cell. The small ribosomal subunit (SSU) binds messenger RNAs (mRNAs) and translates the encoded message by selecting cognate aminoacyl-transfer RNA (tRNA) molecules. The large subunit (LSU) contains the ribosomal catalytic site termed the peptidyl transferase center (PTC), which catalyzes the formation of peptide bonds, thereby polymerizing the amino acids delivered by tRNAs into a polypeptide chain. The nascent polypeptides leave the ribosome through a tunnel in the LSU and interact with protein factors that function in enzymatic processing, targeting, and the membrane insertion of nascent chains at the exit of the ribosomal tunnel. As part of the 5S RNP/5S ribonucleoprotein particle it is an essential component of the LSU, required for its formation and the maturation of rRNAs. It also couples ribosome biogenesis to p53/TP53 activation. As part of the 5S RNP it accumulates in the nucleoplasm and inhibits MDM2, when ribosome biogenesis is perturbed, mediating the stabilization and the activation of TP53. The chain is Large ribosomal subunit protein uL18B (rpl5-b) from Xenopus laevis (African clawed frog).